Consider the following 526-residue polypeptide: Peptide chain release factor 3 (526 aa).

Residues 9–277 (NKRRTFAIIS…DFVEYAPGPQ (269 aa)) enclose the tr-type G domain. GTP contacts are provided by residues 18-25 (SHPDAGKT), 86-90 (DTPGH), and 140-143 (NKLD).

The protein belongs to the TRAFAC class translation factor GTPase superfamily. Classic translation factor GTPase family. PrfC subfamily.

The protein localises to the cytoplasm. In terms of biological role, increases the formation of ribosomal termination complexes and stimulates activities of RF-1 and RF-2. It binds guanine nucleotides and has strong preference for UGA stop codons. It may interact directly with the ribosome. The stimulation of RF-1 and RF-2 is significantly reduced by GTP and GDP, but not by GMP. This is Peptide chain release factor 3 from Legionella pneumophila (strain Paris).